The primary structure comprises 192 residues: Orotate phosphoribosyltransferase (192 aa).

116-124 (EDVVTTGKS) is a 5-phospho-alpha-D-ribose 1-diphosphate binding site. 2 residues coordinate orotate: Thr-120 and Arg-148.

It belongs to the purine/pyrimidine phosphoribosyltransferase family. PyrE subfamily. As to quaternary structure, homodimer. It depends on Mg(2+) as a cofactor.

The catalysed reaction is orotidine 5'-phosphate + diphosphate = orotate + 5-phospho-alpha-D-ribose 1-diphosphate. The protein operates within pyrimidine metabolism; UMP biosynthesis via de novo pathway; UMP from orotate: step 1/2. Its function is as follows. Catalyzes the transfer of a ribosyl phosphate group from 5-phosphoribose 1-diphosphate to orotate, leading to the formation of orotidine monophosphate (OMP). The polypeptide is Orotate phosphoribosyltransferase (Clostridium perfringens (strain ATCC 13124 / DSM 756 / JCM 1290 / NCIMB 6125 / NCTC 8237 / Type A)).